A 670-amino-acid chain; its full sequence is Sodium/potassium/calcium exchanger 2 (670 aa).

Over 1–38 the chain is Cytoplasmic; that stretch reads MDLHQSATVRLLQEWCSHESPSGCRRHYNTRKKLKLIR. The chain crosses the membrane as a helical span at residues 39–59; that stretch reads VIGLVMGLVAVSTVPFSISAF. At 60-133 the chain is on the extracellular side; that stretch reads TETYSQNNRG…DVFSLEERRK (74 aa). 2 disordered regions span residues 67 to 86 and 91 to 122; these read NRGE…HRQR and LNDK…GDYP. Basic and acidic residues predominate over residues 106-122; the sequence is QEDRSENGTDHAQGDYP. Asn112 is a glycosylation site (N-linked (GlcNAc...) asparagine). A helical transmembrane segment spans residues 134–154; sequence GAIILHVIGMIYMFIALAIVC. Residues 155 to 179 lie on the Cytoplasmic side of the membrane; sequence DEFFVPSLTVITEKLGISDDVAGAT. The stretch at 175 to 215 is one Alpha-1 repeat; that stretch reads VAGATFMAAGGSAPELFTSLIGVFIAHSNVGIGTIVGSAVF. A helical membrane pass occupies residues 180-200; that stretch reads FMAAGGSAPELFTSLIGVFIA. Over 201 to 205 the chain is Extracellular; the sequence is HSNVG. The helical transmembrane segment at 206–226 threads the bilayer; the sequence is IGTIVGSAVFNILFVIGMCAL. The Cytoplasmic portion of the chain corresponds to 227–244; that stretch reads FSREILNLTWWPLFRDVS. Residues 245-265 form a helical membrane-spanning segment; the sequence is FYIVDLIMLIIFFLDNVIMWW. A topological domain (extracellular) is located at residue Glu266. Residues 267 to 287 form a helical membrane-spanning segment; it reads SLLLLTAYFAYVVFMKFNVQV. Residues 288-506 lie on the Cytoplasmic side of the membrane; that stretch reads ERWVKQMINR…PDVRKPASKK (219 aa). Positions 312 to 335 are disordered; sequence ASTAGDKEEPTLPNKPRLQRGGSS. Phosphoserine is present on residues Ser337 and Ser341. 2 disordered regions span residues 394–414 and 450–471; these read KCQV…DYAA and AADA…LSLS. A helical membrane pass occupies residues 507-527; that stretch reads FFPITFFGSITWIAVFSYLMV. Topologically, residues 528–542 are extracellular; that stretch reads WWAHQVGETIGISEE. Residues 543–563 form a helical membrane-spanning segment; that stretch reads IMGLTILAAGTSIPDLITSVI. Residues 550–581 form an Alpha-2 repeat; sequence AAGTSIPDLITSVIVARKGLGDMAVSSSVGSN. At 564 to 578 the chain is on the cytoplasmic side; it reads VARKGLGDMAVSSSV. A helical transmembrane segment spans residues 579-599; sequence GSNIFDITVGLPLPWLLYTII. Topologically, residues 600–611 are extracellular; it reads HRFKPVTVSSNG. The chain crosses the membrane as a helical span at residues 612-632; it reads LFCAIVLLFIMLIFVILSIAL. The Cytoplasmic portion of the chain corresponds to 633-639; that stretch reads CKWRMNK. The chain crosses the membrane as a helical span at residues 640–660; the sequence is ILGFIMFGLYFAFLVVSVLLE. Topologically, residues 661–670 are extracellular; that stretch reads DKVLECPVSI.

Belongs to the Ca(2+):cation antiporter (CaCA) (TC 2.A.19) family. SLC24A subfamily. As to expression, expressed abundantly in all regions of the brain and weakly in the eye, large intestine and adrenal tissue.

It localises to the cell membrane. The catalysed reaction is Ca(2+)(out) + K(+)(out) + 4 Na(+)(in) = Ca(2+)(in) + K(+)(in) + 4 Na(+)(out). Its function is as follows. Calcium, potassium:sodium antiporter that transports 1 Ca(2+) and 1 K(+) in exchange for 4 Na(+). Required for learming and memory by regulating neuronal Ca(2+), which is essential for the development of synaptic plasticity. The chain is Sodium/potassium/calcium exchanger 2 (Slc24a2) from Rattus norvegicus (Rat).